The chain runs to 741 residues: Protein O-mannosyl-transferase TMTC4 (741 aa).

The Cytoplasmic portion of the chain corresponds to 1–14; the sequence is MAVLDTDLDHILPS. The chain crosses the membrane as a helical span at residues 15-35; sequence SVLPPFWAKLVVGSVAIVCFA. The Extracellular segment spans residues 36 to 111; sequence RSYDGDFVFD…FHPVGFHVVN (76 aa). Asn-78 carries an N-linked (GlcNAc...) asparagine glycan. The chain crosses the membrane as a helical span at residues 112 to 132; the sequence is ILLHSGISVLMVDVFSVLFGG. At 133-141 the chain is on the cytoplasmic side; the sequence is LQYTSKGRR. Residues 142–162 form a helical membrane-spanning segment; that stretch reads LHLAPRASLLAALLFAVHPVH. The Extracellular portion of the chain corresponds to 163 to 165; that stretch reads TEC. The helical transmembrane segment at 166–186 threads the bilayer; that stretch reads VAGVVGRADLLCALFFLLSFL. Residues 187–198 are Cytoplasmic-facing; it reads GYCKAFRESNKE. A helical membrane pass occupies residues 199-219; it reads GAHSSTFWVLLSIFLGAVAML. Residues 220–224 lie on the Extracellular side of the membrane; the sequence is CKEQG. The helical transmembrane segment at 225–245 threads the bilayer; sequence ITVLGLNAVFDILVIGKFNVL. At 246–268 the chain is on the cytoplasmic side; the sequence is EIVQKVLHKDKSLENLGMLRNGG. A helical membrane pass occupies residues 269–288; it reads LLFRMTLLTSGGAGMLYVRW. The Extracellular portion of the chain corresponds to 289 to 354; the sequence is RIMGTGPPAF…PLIKSISDWR (66 aa). The helical transmembrane segment at 355-375 threads the bilayer; it reads VIALAALWFCLIGLICQALCS. Over 376 to 382 the chain is Cytoplasmic; it reads EDGHKRR. Residues 383–403 form a helical membrane-spanning segment; sequence ILTLGLGFLVIPFLPASNLFF. At 404–412 the chain is on the extracellular side; it reads RVGFVVAER. Residues 413-433 form a helical membrane-spanning segment; the sequence is VLYLPSVGYCVLLTFGFGALS. Topologically, residues 434-440 are cytoplasmic; sequence KHTKKKK. Residues 441-461 form a helical membrane-spanning segment; that stretch reads LIAAVVLGILFINTLRCVLRS. Over 462-741 the chain is Extracellular; sequence GEWRSEEQLF…KLELMQKKAV (280 aa). TPR repeat units follow at residues 482-515, 516-549, 550-583, 584-617, 618-651, 652-685, and 686-719; these read AKVHYNIGKNLADKGNQTAAIRYYREAVRLNPKY, VHAMNNLGNILKERNELQEAEELLSLAVQIQPDF, AAAWMNLGIVQNSLKRFEAAEQSYRTAIKHRRKY, PDCYYNLGRLYADLNRHVDALNAWRNATVLKPEH, SLAWNNMIILLDNTGNLAQAEAVGREALELIPND, HSLMFSLANVLGKSQKYKESEALFLKAIKANPNA, and ASYHGNLAVLYHRWGHLDLAKKHYEISLQLDPTA. Residue Asn-497 is glycosylated (N-linked (GlcNAc...) asparagine). Asn-609 carries N-linked (GlcNAc...) asparagine glycosylation.

Belongs to the TMTC family.

It is found in the membrane. The protein localises to the endoplasmic reticulum. The catalysed reaction is a di-trans,poly-cis-dolichyl beta-D-mannosyl phosphate + L-seryl-[protein] = 3-O-(alpha-D-mannosyl)-L-seryl-[protein] + a di-trans,poly-cis-dolichyl phosphate + H(+). It carries out the reaction a di-trans,poly-cis-dolichyl beta-D-mannosyl phosphate + L-threonyl-[protein] = 3-O-(alpha-D-mannosyl)-L-threonyl-[protein] + a di-trans,poly-cis-dolichyl phosphate + H(+). It functions in the pathway protein modification; protein glycosylation. Functionally, transfers mannosyl residues to the hydroxyl group of serine or threonine residues. The 4 members of the TMTC family are O-mannosyl-transferases dedicated primarily to the cadherin superfamily, each member seems to have a distinct role in decorating the cadherin domains with O-linked mannose glycans at specific regions. Also acts as O-mannosyl-transferase on other proteins such as PDIA3. In Homo sapiens (Human), this protein is Protein O-mannosyl-transferase TMTC4.